The following is a 65-amino-acid chain: VESP-VB2 (65 aa).

Positions 1-23 are cleaved as a signal peptide; that stretch reads MKMSILFLFALIASLACLQLTFA. AXPX repeat units lie at residues 23–26, 27–30, 31–34, 35–38, 39–42, 43–46, and 47–50; these read AAPA, ASPF, ANPG, ASPE, AAPL, ADPL, and ADPF. Positions 24-49 are excised as a propeptide; that stretch reads APAASPFANPGASPEAAPLADPLADP. L62 is subject to Leucine amide.

This sequence belongs to the MCD family. Mastoparan subfamily. Expressed by the venom gland.

The protein localises to the secreted. In terms of biological role, antimicrobial peptide. Shows activity against both Gram-positive and -negative bacteria, as well against fungi. Also promotes important mast cell degranulation. Shows little hemolytic activity on rabbit and human erythrocytes. Its mast cell degranulation activity may be related to the activation of G-protein coupled receptors in mast cells as well as interaction with other proteins located in cell endosomal membranes in the mast cells. The polypeptide is VESP-VB2 (Vespa bicolor (Black shield wasp)).